A 286-amino-acid chain; its full sequence is Putative L-ribulose-5-phosphate 3-epimerase SgbU (286 aa).

It belongs to the L-ribulose-5-phosphate 3-epimerase family.

The catalysed reaction is L-ribulose 5-phosphate = L-xylulose 5-phosphate. Catalyzes the isomerization of L-xylulose-5-phosphate to L-ribulose-5-phosphate (Potential). May be involved in the utilization of 2,3-diketo-L-gulonate. This chain is Putative L-ribulose-5-phosphate 3-epimerase SgbU (sgbU), found in Escherichia coli (strain K12).